Reading from the N-terminus, the 383-residue chain is Putative gustatory receptor 22c (383 aa).

Residues 1-11 lie on the Cytoplasmic side of the membrane; the sequence is MFASRSDLQSR. A helical transmembrane segment spans residues 12 to 32; sequence LCWIILKATLYSSWFLGVFPY. The Extracellular portion of the chain corresponds to 33 to 45; the sequence is RFDSRNGQLKRSR. Residues 46–66 traverse the membrane as a helical segment; the sequence is FLLFYGLILNFFLLLKMVCSG. The Cytoplasmic portion of the chain corresponds to 67–86; it reads GQKLGIPEAFARNSVLENTH. A helical membrane pass occupies residues 87–107; the sequence is YTTGMLAVFSCVVIHFLNFWG. The Extracellular portion of the chain corresponds to 108–144; that stretch reads STRVQDLANELLVLEYQQFASLNETKCPKFNSFVIQK. N-linked (GlcNAc...) asparagine glycosylation is present at Asn130. A helical transmembrane segment spans residues 145–165; the sequence is WLSVIGLLLSYLSIAYGLPGN. Residues 166–250 are Cytoplasmic-facing; the sequence is NFSVEMVLIN…YMVATYEYHM (85 aa). Residues 251–271 traverse the membrane as a helical segment; the sequence is TLVLTTGLASNFLAIYSWIVL. Residues 272–279 lie on the Extracellular side of the membrane; that stretch reads DISMNINF. A helical membrane pass occupies residues 280–300; sequence IYLLIFPLFLLVNVWNLWLSI. Topologically, residues 301–360 are cytoplasmic; that stretch reads AASDLAENAGKSTQTVLKLFADLEVKDIELERSVNEFALLCGHCQFNFHVCGLFTINYKM. The chain crosses the membrane as a helical span at residues 361 to 381; sequence GFQMIITSFLYLIYMIQFDFM. At 382-383 the chain is on the extracellular side; the sequence is NL.

It belongs to the insect chemoreceptor superfamily. Gustatory receptor (GR) family. Gr22e subfamily. In terms of tissue distribution, taste bristles in the foreleg and labial palps.

Its subcellular location is the cell membrane. Its function is as follows. Probable gustatory receptor which mediates acceptance or avoidance behavior, depending on its substrates. The sequence is that of Putative gustatory receptor 22c (Gr22c) from Drosophila melanogaster (Fruit fly).